The following is a 207-amino-acid chain: LexA repressor (207 aa).

Positions 28–48 (VREIAVAVGLASSSTVHGHLE) form a DNA-binding region, H-T-H motif. Residues Ser129 and Lys167 each act as for autocatalytic cleavage activity in the active site.

It belongs to the peptidase S24 family. In terms of assembly, homodimer.

The catalysed reaction is Hydrolysis of Ala-|-Gly bond in repressor LexA.. Its function is as follows. Represses a number of genes involved in the response to DNA damage (SOS response), including recA and lexA. In the presence of single-stranded DNA, RecA interacts with LexA causing an autocatalytic cleavage which disrupts the DNA-binding part of LexA, leading to derepression of the SOS regulon and eventually DNA repair. The polypeptide is LexA repressor (Oceanobacillus iheyensis (strain DSM 14371 / CIP 107618 / JCM 11309 / KCTC 3954 / HTE831)).